The following is a 319-amino-acid chain: Aminoimidazole riboside kinase (319 aa).

5-amino-1-(beta-D-ribosyl)imidazole is bound by residues Asp16, Gly31, and Tyr101. 158 to 160 serves as a coordination point for ATP; the sequence is DVN. Arg162 contributes to the 5-amino-1-(beta-D-ribosyl)imidazole binding site. Ala180, Ala181, and Ala183 together coordinate K(+). Lys187 and Glu192 together coordinate ATP. Gly213 contacts K(+). 220–225 serves as a coordination point for ATP; it reads SLGADG. K(+)-binding residues include Asp246 and Thr248. Asp252 lines the 5-amino-1-(beta-D-ribosyl)imidazole pocket. Residue Asp252 is the Proton acceptor of the active site. Asn281 lines the ATP pocket. K(+) contacts are provided by Ala287, Ala290, and Gly292.

This sequence belongs to the carbohydrate kinase PfkB family. Homodimer.

The enzyme catalyses 5-amino-1-(beta-D-ribosyl)imidazole + ATP = 5-amino-1-(5-phospho-beta-D-ribosyl)imidazole + ADP + H(+). Its activity is regulated as follows. Potassium may regulate kinase activity. In terms of biological role, phosphorylates 5-amino-1-(beta-D-ribosyl)imidazole (AIRs) to form 5-amino-1-(5-phospho-beta-D-ribosyl)imidazole (AIR), an important intermediate in the purine and thiamine biosynthetic pathways. It allows the use of exogenous aminoimidazole riboside (AIRs) to satisfy the cellular requirement for purines and thiamine. The polypeptide is Aminoimidazole riboside kinase (Salmonella typhimurium (strain LT2 / SGSC1412 / ATCC 700720)).